The following is a 436-amino-acid chain: L-threonine dehydratase biosynthetic IlvA (436 aa).

A catalytic region spans residues 1–357 (MSETYVSEKS…HRGLKHYFLV (357 aa)). Residue Lys70 is modified to N6-(pyridoxal phosphate)lysine. Pyridoxal 5'-phosphate-binding positions include Asn97, 203-207 (GGGGL), and Ser329. The ACT-like domain maps to 353 to 427 (HYFLVNFPQK…SAIDSRRLEP (75 aa)). The interval 358–436 (NFPQKPGQLR…PGTPEYEYLT (79 aa)) is regulatory.

The protein belongs to the serine/threonine dehydratase family. As to quaternary structure, homotetramer. Requires pyridoxal 5'-phosphate as cofactor.

The enzyme catalyses L-threonine = 2-oxobutanoate + NH4(+). It functions in the pathway amino-acid biosynthesis; L-isoleucine biosynthesis; 2-oxobutanoate from L-threonine: step 1/1. Its function is as follows. Catalyzes the anaerobic formation of alpha-ketobutyrate and ammonia from threonine in a two-step reaction. The first step involved a dehydration of threonine and a production of enamine intermediates (aminocrotonate), which tautomerizes to its imine form (iminobutyrate). Both intermediates are unstable and short-lived. The second step is the nonenzymatic hydrolysis of the enamine/imine intermediates to form 2-ketobutyrate and free ammonia. In the low water environment of the cell, the second step is accelerated by RidA. This chain is L-threonine dehydratase biosynthetic IlvA (ilvA), found in Corynebacterium glutamicum (strain ATCC 13032 / DSM 20300 / JCM 1318 / BCRC 11384 / CCUG 27702 / LMG 3730 / NBRC 12168 / NCIMB 10025 / NRRL B-2784 / 534).